Reading from the N-terminus, the 431-residue chain is Enolase (431 aa).

Residues 27-47 (LESGHSGRAAVPSGASTGSRE) are disordered. A (2R)-2-phosphoglycerate-binding site is contributed by glutamine 163. Residue glutamate 205 is the Proton donor of the active site. Aspartate 242, glutamate 285, and aspartate 312 together coordinate Mg(2+). Residues lysine 337, arginine 366, serine 367, and lysine 388 each contribute to the (2R)-2-phosphoglycerate site. The active-site Proton acceptor is lysine 337.

Belongs to the enolase family. Mg(2+) is required as a cofactor.

It is found in the cytoplasm. The protein localises to the secreted. The protein resides in the cell surface. The catalysed reaction is (2R)-2-phosphoglycerate = phosphoenolpyruvate + H2O. The protein operates within carbohydrate degradation; glycolysis; pyruvate from D-glyceraldehyde 3-phosphate: step 4/5. Catalyzes the reversible conversion of 2-phosphoglycerate (2-PG) into phosphoenolpyruvate (PEP). It is essential for the degradation of carbohydrates via glycolysis. The protein is Enolase of Oleidesulfovibrio alaskensis (strain ATCC BAA-1058 / DSM 17464 / G20) (Desulfovibrio alaskensis).